Reading from the N-terminus, the 2093-residue chain is Nuclear-pore anchor (2093 aa).

Coiled coils occupy residues 57–362 (LEQK…TDEL), 439–529 (MILQ…RDVQ), 570–627 (DING…RAEE), and 688–1172 (QEKA…LEAK). Positions 1175–1198 (NSAEKNSRSGTISSGSTDSDHLED) are disordered. Residues 1182-1191 (RSGTISSGST) are compositionally biased toward low complexity. Coiled-coil stretches lie at residues 1208–1252 (LRRT…AERA) and 1293–1585 (EKCQ…LKHA). 3 disordered regions span residues 1453 to 1489 (YEKE…AVVE), 1525 to 1555 (KKDE…KKEK), and 1627 to 2093 (SNSQ…PSPP). The span at 1470-1483 (QLEEAKEEAGKRTT) shows a compositional bias: basic and acidic residues. The span at 1652-1674 (STMTRVPSSTPLIKSPVATTQQL) shows a compositional bias: polar residues. 2 stretches are compositionally biased toward basic and acidic residues: residues 1710–1719 (KPEESPKVDV) and 1729–1740 (DEGKQPAAHEPE). The span at 1764–1779 (SEPQQDSLTQGETSSE) shows a compositional bias: polar residues. Residues 1789–1808 (KGSESHPDTSEGENLAKEPA) are compositionally biased toward basic and acidic residues. Residues 1818 to 1849 (TTDGDNEETEAENAEEKTEEYVEAQQDNEADE) are a coiled coil. 2 stretches are compositionally biased toward acidic residues: residues 1821 to 1830 (GDNEETEAEN) and 1838 to 1903 (YVEA…EEGT). Positions 1921–1931 (TLATPTQSPSR) are enriched in polar residues. A compositionally biased stretch (acidic residues) spans 1935-1963 (AMEEAETTIETPVEDDKTDEGGDAAEEAA). Over residues 1984-2009 (TSAATTSPVSTAPTTSSTLASAITSS) the composition is skewed to low complexity. Ser-2022 bears the Phosphoserine mark.

As to quaternary structure, part of the nuclear pore complex (NPC). The NPC has an eight-fold symmetrical structure comprising a central transport channel and two rings, the cytoplasmic and nuclear rings, to which eight filaments are attached. The cytoplasmic filaments have loose ends, while the nuclear filaments are joined in a distal ring, forming a nuclear basket. NPCs are highly dynamic in configuration and composition, and can be devided in 3 subcomplexes, the NUP62 subcomplex, the NUP107-160 subcomplex and the NUP93 subcomplex, containing approximately 30 different nucleoporin proteins. Interacts with MAD1 and (via N-terminus) with ESD4. In terms of tissue distribution, ubiquitous. Highest expression in the shoot apical region.

Its subcellular location is the nucleus envelope. The protein resides in the nucleus membrane. The protein localises to the nucleus. It localises to the nuclear pore complex. Component of the nuclear pore complex. Acts as a docking site for activities required for desumoylation and mRNA export. Required for the proper expression or localization of a subset of miRNAs. Plays a role in meristematic cell division by interacting with spindle assembly checkpoint proteins. The sequence is that of Nuclear-pore anchor from Arabidopsis thaliana (Mouse-ear cress).